The sequence spans 308 residues: Ornithine carbamoyltransferase (308 aa).

Carbamoyl phosphate is bound by residues 50 to 53 (STRT), Gln77, Arg101, and 128 to 131 (HPCQ). L-ornithine is bound by residues Asn160, Asp224, and 228–229 (SM). Carbamoyl phosphate contacts are provided by residues 264–265 (CL) and Arg292.

This sequence belongs to the aspartate/ornithine carbamoyltransferase superfamily. OTCase family.

The protein localises to the cytoplasm. The enzyme catalyses carbamoyl phosphate + L-ornithine = L-citrulline + phosphate + H(+). It functions in the pathway amino-acid biosynthesis; L-arginine biosynthesis; L-arginine from L-ornithine and carbamoyl phosphate: step 1/3. Reversibly catalyzes the transfer of the carbamoyl group from carbamoyl phosphate (CP) to the N(epsilon) atom of ornithine (ORN) to produce L-citrulline. This chain is Ornithine carbamoyltransferase, found in Mycobacterium ulcerans (strain Agy99).